Consider the following 179-residue polypeptide: NADH-quinone oxidoreductase subunit B (179 aa).

Cys-52, Cys-53, Cys-117, and Cys-147 together coordinate [4Fe-4S] cluster.

It belongs to the complex I 20 kDa subunit family. In terms of assembly, NDH-1 is composed of 14 different subunits. Subunits NuoB, C, D, E, F, and G constitute the peripheral sector of the complex. It depends on [4Fe-4S] cluster as a cofactor.

The protein localises to the cell inner membrane. It catalyses the reaction a quinone + NADH + 5 H(+)(in) = a quinol + NAD(+) + 4 H(+)(out). In terms of biological role, NDH-1 shuttles electrons from NADH, via FMN and iron-sulfur (Fe-S) centers, to quinones in the respiratory chain. The immediate electron acceptor for the enzyme in this species is believed to be ubiquinone. Couples the redox reaction to proton translocation (for every two electrons transferred, four hydrogen ions are translocated across the cytoplasmic membrane), and thus conserves the redox energy in a proton gradient. This Ehrlichia chaffeensis (strain ATCC CRL-10679 / Arkansas) protein is NADH-quinone oxidoreductase subunit B.